Here is a 345-residue protein sequence, read N- to C-terminus: Ubiquitin-associated domain-containing protein 2 (345 aa).

The first 39 residues, 1–39 (MFTSTGSSGLYKAPLSKSLLLVPSALSLLLTLLLPHCQK), serve as a signal peptide directing secretion. Residues 40–91 (FFVYDLHAVKHDLQIWRLICGRIICLDLKDAFCSGLLIYNFRIFERRYGSRK) are Extracellular-facing. The chain crosses the membrane as a helical span at residues 92–112 (FASFLLGSWVLSALFDFILVE). Over 113–125 (AVQYSLGVTVASN) the chain is Cytoplasmic. A helical membrane pass occupies residues 126–146 (LPSGFLAPVFALFVPFHCSIP). Topologically, residues 147–163 (RVQVAQILGPLSITNKT) are extracellular. Asn-161 carries N-linked (GlcNAc...) asparagine glycosylation. A helical transmembrane segment spans residues 164–184 (LIYILGLQLFTSGSYIWIVAM). Topologically, residues 185-345 (SGLISGMCYD…NVATNFLLQH (161 aa)) are cytoplasmic. Residues 287 to 306 (NINYQDGPRSEQRASPPLEV) form a disordered region. The 41-residue stretch at 305–345 (EVSEEQVARLMEMGFSRGDALEALRASNNDLNVATNFLLQH) folds into the UBA domain.

Interacts with LMBR1L, FAF2, AMFR and VCP.

The protein resides in the endoplasmic reticulum membrane. Its function is as follows. Restricts trafficking of FAF2 from the endoplasmic reticulum to lipid droplets. In association with LMBR1L and E3 ubiquitin-protein ligase AMFR, negatively regulates the canonical Wnt signaling pathway in the lymphocytes by promoting the ubiquitin-mediated degradation of CTNNB1 and Wnt receptors FZD6 and LRP6. This Mus musculus (Mouse) protein is Ubiquitin-associated domain-containing protein 2 (Ubac2).